Reading from the N-terminus, the 548-residue chain is Probable 2,3-bisphosphoglycerate-independent phosphoglycerate mutase (548 aa).

2 residues coordinate Mn(2+): Asp20 and Ser73. The active-site Phosphoserine intermediate is Ser73. Substrate contacts are provided by residues His134, 164–165 (RD), Arg200, Arg207, 279–282 (RGDR), and Lys354. The Mn(2+) site is built by Asp422, His426, Asp463, His464, and His493.

Belongs to the BPG-independent phosphoglycerate mutase family. Monomer. It depends on Mn(2+) as a cofactor.

The enzyme catalyses (2R)-2-phosphoglycerate = (2R)-3-phosphoglycerate. It participates in carbohydrate degradation; glycolysis; pyruvate from D-glyceraldehyde 3-phosphate: step 3/5. Functionally, catalyzes the interconversion of 2-phosphoglycerate and 3-phosphoglycerate. The chain is Probable 2,3-bisphosphoglycerate-independent phosphoglycerate mutase (gpmI) from Leptospira interrogans serogroup Icterohaemorrhagiae serovar Lai (strain 56601).